Reading from the N-terminus, the 188-residue chain is Inosine triphosphate pyrophosphatase (188 aa).

Residue 9–14 (TGNAKK) participates in ITP binding. Mg(2+) is bound at residue E39. Residues K51, 67–68 (DT), K84, 143–146 (FGWD), K166, and 171–172 (HR) each bind ITP.

The protein belongs to the HAM1 NTPase family. As to quaternary structure, homodimer. Requires Mg(2+) as cofactor. Mn(2+) is required as a cofactor.

It localises to the cytoplasm. The enzyme catalyses ITP + H2O = IMP + diphosphate + H(+). The catalysed reaction is dITP + H2O = dIMP + diphosphate + H(+). It carries out the reaction XTP + H2O = XMP + diphosphate + H(+). Functionally, pyrophosphatase that hydrolyzes non-canonical purine nucleotides such as inosine triphosphate (ITP), deoxyinosine triphosphate (dITP) or xanthosine 5'-triphosphate (XTP) to their respective monophosphate derivatives. The enzyme does not distinguish between the deoxy- and ribose forms. Probably excludes non-canonical purines from RNA and DNA precursor pools, thus preventing their incorporation into RNA and DNA and avoiding chromosomal lesions. This Aedes aegypti (Yellowfever mosquito) protein is Inosine triphosphate pyrophosphatase.